Here is a 465-residue protein sequence, read N- to C-terminus: CCA-adding enzyme (465 aa).

ATP contacts are provided by Ser-63 and Lys-66. Positions 63 and 66 each coordinate CTP. Residues Glu-75, Asp-77, and Asp-127 each contribute to the Mg(2+) site. ATP-binding residues include His-149, Lys-171, and Tyr-180. 3 residues coordinate CTP: His-149, Lys-171, and Tyr-180.

The protein belongs to the tRNA nucleotidyltransferase/poly(A) polymerase family. Archaeal CCA-adding enzyme subfamily. In terms of assembly, homodimer. Mg(2+) is required as a cofactor.

The catalysed reaction is a tRNA precursor + 2 CTP + ATP = a tRNA with a 3' CCA end + 3 diphosphate. The enzyme catalyses a tRNA with a 3' CCA end + 2 CTP + ATP = a tRNA with a 3' CCACCA end + 3 diphosphate. Catalyzes the addition and repair of the essential 3'-terminal CCA sequence in tRNAs without using a nucleic acid template. Adds these three nucleotides in the order of C, C, and A to the tRNA nucleotide-73, using CTP and ATP as substrates and producing inorganic pyrophosphate. tRNA 3'-terminal CCA addition is required both for tRNA processing and repair. Also involved in tRNA surveillance by mediating tandem CCA addition to generate a CCACCA at the 3' terminus of unstable tRNAs. While stable tRNAs receive only 3'-terminal CCA, unstable tRNAs are marked with CCACCA and rapidly degraded. The chain is CCA-adding enzyme from Aeropyrum pernix (strain ATCC 700893 / DSM 11879 / JCM 9820 / NBRC 100138 / K1).